The chain runs to 1833 residues: Proteasome activator complex subunit 4A (1833 aa).

HEAT repeat units follow at residues 460 to 504 (PEGP…LVDC) and 983 to 1022 (NFCC…NHSG). The disordered stretch occupies residues 1095 to 1122 (SSSPEPNPGAASEQEELEGRKREEQKNK). A compositionally biased stretch (basic and acidic residues) spans 1111–1122 (LEGRKREEQKNK). HEAT repeat units lie at residues 1164–1202 (LPLP…QLKR), 1344–1382 (DAFL…GSKH), 1626–1664 (SDQI…YNLF), and 1670–1708 (AKAV…CNFL). The bromodomain-like (BRDL) stretch occupies residues 1640–1728 (SRSSSWHARY…ESLSKTRLPK (89 aa)).

Belongs to the BLM10 family. Homodimer. Interacts with the 20S and 26S proteasomes.

It is found in the cytoplasm. It localises to the cytosol. The protein localises to the nucleus. Its subcellular location is the nucleus speckle. Functionally, associated component of the proteasome that specifically recognizes acetylated histones and promotes ATP- and ubiquitin-independent degradation of core histones during DNA damage response. Recognizes and binds acetylated histones via its bromodomain-like (BRDL) region and activates the proteasome by opening the gated channel for substrate entry. Binds to the core proteasome via its C-terminus, which occupies the same binding sites as the proteasomal ATPases, opening the closed structure of the proteasome via an active gating mechanism. involved in DNA damage response in somatic cells: binds to acetylated histones and promotes degradation of histones. The protein is Proteasome activator complex subunit 4A (psme4a) of Danio rerio (Zebrafish).